Consider the following 231-residue polypeptide: Ribonuclease 3 (231 aa).

One can recognise an RNase III domain in the interval 6–135; that stretch reads AAMLKERFGI…FVGALYLDQG (130 aa). Mg(2+) is bound at residue Glu48. Asp52 is an active-site residue. 2 residues coordinate Mg(2+): Asp121 and Glu124. The active site involves Glu124. The DRBM domain occupies 161–230; it reads DYKTTLQEYL…ARQAYSQLQQ (70 aa). Residues 209–231 are disordered; sequence WGHSKKEAEQSAARQAYSQLQQK. Over residues 220 to 231 the composition is skewed to polar residues; sequence AARQAYSQLQQK.

It belongs to the ribonuclease III family. Homodimer. Mg(2+) is required as a cofactor.

It is found in the cytoplasm. The catalysed reaction is Endonucleolytic cleavage to 5'-phosphomonoester.. Digests double-stranded RNA. Involved in the processing of primary rRNA transcript to yield the immediate precursors to the large and small rRNAs (23S and 16S). Processes some mRNAs, and tRNAs when they are encoded in the rRNA operon. Processes pre-crRNA and tracrRNA of type II CRISPR loci if present in the organism. This is Ribonuclease 3 from Lactiplantibacillus plantarum (strain ATCC BAA-793 / NCIMB 8826 / WCFS1) (Lactobacillus plantarum).